The following is a 99-amino-acid chain: uncharacterized protein (99 aa).

Positions 1–99 are disordered; sequence MSDFPPSYQQ…KYHSKSDVGF (99 aa). A compositionally biased stretch (polar residues) spans 19–29; it reads QESSTSNNASE.

This is an uncharacterized protein from Schizosaccharomyces pombe (strain 972 / ATCC 24843) (Fission yeast).